Consider the following 213-residue polypeptide: Putative manganese efflux pump MntP (213 aa).

Helical transmembrane passes span 3–23 (ILSIVLTGFGLAMDAFAVSVA), 36–56 (ALKVALFFGGFQALMPLIGWG), 67–87 (AFDHWIAFILLGFIGGKMIFE), 130–150 (LAIATSIDALAVGVSFAFLGI), 152–172 (IVQTIIIIGIITFVLCFLGVI), and 187–207 (IVGGVILILIGINILLEHTGI).

The protein belongs to the MntP (TC 9.B.29) family.

It is found in the cell membrane. Its function is as follows. Probably functions as a manganese efflux pump. In Clostridium perfringens (strain ATCC 13124 / DSM 756 / JCM 1290 / NCIMB 6125 / NCTC 8237 / Type A), this protein is Putative manganese efflux pump MntP.